The chain runs to 201 residues: Peptide deformylase (201 aa).

Residues Cys114 and His156 each contribute to the Fe cation site. Residue Glu157 is part of the active site. His160 serves as a coordination point for Fe cation.

It belongs to the polypeptide deformylase family. Fe(2+) serves as cofactor.

It carries out the reaction N-terminal N-formyl-L-methionyl-[peptide] + H2O = N-terminal L-methionyl-[peptide] + formate. In terms of biological role, removes the formyl group from the N-terminal Met of newly synthesized proteins. Requires at least a dipeptide for an efficient rate of reaction. N-terminal L-methionine is a prerequisite for activity but the enzyme has broad specificity at other positions. This chain is Peptide deformylase, found in Tropheryma whipplei (strain TW08/27) (Whipple's bacillus).